The sequence spans 1697 residues: Phosphatidylinositol 3-kinase 3 (1697 aa).

Disordered regions lie at residues 57–91 (RSIN…TQPC), 169–229 (INNN…DSSI), 244–279 (KTTE…ENEI), 310–376 (KKNN…NSVG), 398–428 (SWTS…SGSS), and 440–504 (DLLK…NNDE). 3 stretches are compositionally biased toward low complexity: residues 60–87 (NNNN…NNNN), 170–196 (NNNN…NNNN), and 212–222 (NNNSNNNNNIN). Low complexity-rich tracts occupy residues 312–374 (NNNN…TTNS) and 398–408 (SWTSSKPTSSS). Polar residues-rich tracts occupy residues 409-428 (IGFA…SGSS) and 444-456 (SPSS…SDIF). Low complexity predominate over residues 457-503 (NENNNNNNNNNNNNNNNNNNNNNNNNNNNNNNNNEELINNNNNNNND). The region spanning 737 to 823 (PEFFVIRVHL…KGEIDLTMVE (87 aa)) is the PI3K-RBD domain. The C2 PI3K-type domain occupies 888 to 1036 (VTENLQVRLL…QAIIIAFEFK (149 aa)). One can recognise a PIK helical domain in the interval 1060-1238 (GNELPVVTME…RVLSSGFLRY (179 aa)). Residues 1304–1581 (IPEKCKSMDS…LIHESIGTLT (278 aa)) enclose the PI3K/PI4K catalytic domain. A G-loop region spans residues 1310–1316 (SMDSAKV). The tract at residues 1447–1455 (GIGDRHNDN) is catalytic loop. Residues 1466–1492 (HIDFGHFLGNFKTFAGFQREKAPFVLT) form an activation loop region. Residues 1609 to 1625 (ASSLNLNKNKPSSQSKL) show a composition bias toward low complexity. The tract at residues 1609-1697 (ASSLNLNKNK…DTEKENSIDK (89 aa)) is disordered. Tandem repeats lie at residues 1622 to 1626 (QSKLD), 1627 to 1631 (LSRSD), 1632 to 1636 (LSRSD), 1642 to 1646 (SSRLD), and 1647 to 1651 (LSRSD). The segment at 1622–1651 (QSKLDLSRSDLSRSDSSRSDSSRLDLSRSD) is 5 X 5 AA approximate repeats. Basic and acidic residues-rich tracts occupy residues 1626–1681 (DLSR…DKDN) and 1688–1697 (DTEKENSIDK). Positions 1659 to 1672 (KEKEKEKEKEKEKE) are 7 X 2 AA tandem repeats of K-E.

The protein belongs to the PI3/PI4-kinase family.

The enzyme catalyses a 1,2-diacyl-sn-glycero-3-phospho-(1D-myo-inositol) + ATP = a 1,2-diacyl-sn-glycero-3-phospho-(1D-myo-inositol-3-phosphate) + ADP + H(+). The protein is Phosphatidylinositol 3-kinase 3 (pikC) of Dictyostelium discoideum (Social amoeba).